We begin with the raw amino-acid sequence, 91 residues long: Glycophorin-B (91 aa).

Positions 1-19 are cleaved as a signal peptide; the sequence is MYGKIIFVLLLSEIVSISA. The Extracellular portion of the chain corresponds to 20–59; it reads LSTTEVAMHTSTSSSVTKSYISSQTNGETGQLVHRFTVPA. Residue threonine 36 is glycosylated (O-linked (GalNAc...) threonine). O-linked (GalNAc...) serine glycosylation occurs at serine 38. A helical transmembrane segment spans residues 60-81; that stretch reads PVVIILIILCVMAGIIGTILLI. Over 82 to 91 the chain is Cytoplasmic; sequence SYSIRRLIKA.

It belongs to the glycophorin-A family. Component of the ankyrin-1 complex in the erythrocyte, composed of ANK1, RHCE, RHAG, SLC4A1, EPB42, GYPA, GYPB and AQP1. Interacts (via the N-terminal) with RHAG; this interaction bridges the (RHAG)2(RHCE) heterotrimer with the SLC4A1 Band 3 I dimer complexed with GYPA. In terms of processing, the N-terminal extracellular domain is heavily glycosylated on serine and threonine residues.

The protein localises to the cell membrane. Its function is as follows. Component of the ankyrin-1 complex, a multiprotein complex involved in the stability and shape of the erythrocyte membrane. This chain is Glycophorin-B, found in Homo sapiens (Human).